A 243-amino-acid polypeptide reads, in one-letter code: MGAAASIQTTVTTINKKISEKLEQTASASATANCDINIGNIIFKKNKGCNVLVKNMCSANASAQLDAIVSAVREVYDQLTEQQKAYAPSLLTAALNIQTNVSTITQDFETYIKQKCNSDAVINNIINVQSLEVDECSAPPGQIMTFEFINTGTATGNCAMKSVLDVLTKSSDRVSGNQSTGNDFSKYLYIIGGIICFLILLYYAKKLFFMSTNDKVKVLLAKKPDVHWTTYIDTYFRSSPVLV.

Gly-2 carries N-myristoyl glycine; by host lipidation. Positions 2–12 (GAAASIQTTVT) are targeting to MV membrane. Residues 2-183 (GAAASIQTTV…VSGNQSTGND (182 aa)) are Virion surface-facing. Intrachain disulfides connect Cys-34/Cys-57, Cys-49/Cys-136, and Cys-116/Cys-158. A helical transmembrane segment spans residues 184 to 204 (FSKYLYIIGGIICFLILLYYA). Topologically, residues 205 to 243 (KKLFFMSTNDKVKVLLAKKPDVHWTTYIDTYFRSSPVLV) are intravirion.

The protein belongs to the orthopoxvirus OPG095 family. Component of the entry fusion complex (EFC) composed of OPG053, OPG076, OPG086, OPG094, OPG095, OPG099, OPG107, OPG143, OPG104, OPG147 and OPG155. Except for OPG095 and OPG053, each of the EFC proteins is required for assembly or stability of the complex. In terms of processing, myristoylated. Post-translationally, disulfid bonds are oxidized in the cytoplasm by OPG088 protein. Unglycosylated because produced in viral factories instead of the classic ER -Golgi route.

It localises to the virion membrane. In terms of biological role, component of the entry fusion complex (EFC), which consists of 11 proteins. During cell infection, this complex mediates entry of the virion core into the host cytoplasm by a two-step mechanism consisting of lipid mixing of the viral and cellular membranes and subsequent pore formation. The polypeptide is Entry-fusion complex associated protein OPG095 (OPG099) (Vertebrata (FPV)).